The primary structure comprises 542 residues: Putative DEAD-box ATP-dependent RNA helicase 43 (542 aa).

Residues Lys-97–Val-125 carry the Q motif motif. The Helicase ATP-binding domain maps to Leu-128 to Val-312. Residue Ala-141–Thr-148 participates in ATP binding. A DEAD box motif is present at residues Asp-260–Asp-263. One can recognise a Helicase C-terminal domain in the interval Asp-323–Asn-483. The segment at Lys-499 to Lys-516 adopts a CCHC-type zinc-finger fold.

Belongs to the DEAD box helicase family. DDX41 subfamily.

The enzyme catalyses ATP + H2O = ADP + phosphate + H(+). The protein is Putative DEAD-box ATP-dependent RNA helicase 43 (RH43) of Arabidopsis thaliana (Mouse-ear cress).